Here is a 447-residue protein sequence, read N- to C-terminus: 3-phosphoshikimate 1-carboxyvinyltransferase (447 aa).

The 3-phosphoshikimate site is built by K25, S26, and R30. K25 serves as a coordination point for phosphoenolpyruvate. Positions 96 and 124 each coordinate phosphoenolpyruvate. The 3-phosphoshikimate site is built by S171, S172, Q173, S203, D325, and K352. Q173 is a phosphoenolpyruvate binding site. D325 acts as the Proton acceptor in catalysis. R356, R400, and K425 together coordinate phosphoenolpyruvate.

The protein belongs to the EPSP synthase family. Monomer.

It localises to the cytoplasm. It carries out the reaction 3-phosphoshikimate + phosphoenolpyruvate = 5-O-(1-carboxyvinyl)-3-phosphoshikimate + phosphate. It functions in the pathway metabolic intermediate biosynthesis; chorismate biosynthesis; chorismate from D-erythrose 4-phosphate and phosphoenolpyruvate: step 6/7. Catalyzes the transfer of the enolpyruvyl moiety of phosphoenolpyruvate (PEP) to the 5-hydroxyl of shikimate-3-phosphate (S3P) to produce enolpyruvyl shikimate-3-phosphate and inorganic phosphate. This chain is 3-phosphoshikimate 1-carboxyvinyltransferase, found in Bordetella petrii (strain ATCC BAA-461 / DSM 12804 / CCUG 43448).